The sequence spans 261 residues: Carnitinyl-CoA dehydratase (261 aa).

Catalysis depends on E111, which acts as the Nucleophile. E131 functions as the Proton acceptor in the catalytic mechanism.

It belongs to the enoyl-CoA hydratase/isomerase family.

The catalysed reaction is (R)-carnitinyl-CoA = crotonobetainyl-CoA + H2O. It participates in amine and polyamine metabolism; carnitine metabolism. Functionally, catalyzes the reversible dehydration of L-carnitinyl-CoA to crotonobetainyl-CoA. This Escherichia coli (strain ATCC 8739 / DSM 1576 / NBRC 3972 / NCIMB 8545 / WDCM 00012 / Crooks) protein is Carnitinyl-CoA dehydratase.